We begin with the raw amino-acid sequence, 147 residues long: uncharacterized protein (147 aa).

Residues valine 51–methionine 72 form a disordered region.

This is an uncharacterized protein from Gallid herpesvirus 2 (strain GA) (GaHV-2).